The primary structure comprises 516 residues: L-amino-acid oxidase (516 aa).

An N-terminal signal peptide occupies residues 1–18 (MNVFFMFSLLFLAALGSC). A disulfide bridge links C28 with C189. Residues 61–62 (MA), 81–82 (EA), R89, and 103–106 (GPMR) each bind FAD. Residues R106 and H239 each coordinate substrate. V279 is an FAD binding site. The cysteines at positions 349 and 430 are disulfide-linked. N379 is a glycosylation site (N-linked (GlcNAc...) asparagine). A substrate-binding site is contributed by Y390. FAD is bound by residues E475 and 482 to 487 (GWIDST). 482-483 (GW) is a binding site for substrate.

The protein belongs to the flavin monoamine oxidase family. FIG1 subfamily. As to quaternary structure, homodimer; non-covalently linked. It depends on FAD as a cofactor. As to expression, expressed by the venom gland.

The protein resides in the secreted. The enzyme catalyses an L-alpha-amino acid + O2 + H2O = a 2-oxocarboxylate + H2O2 + NH4(+). Its function is as follows. Catalyzes an oxidative deamination of predominantly hydrophobic and aromatic L-amino acids, thus producing hydrogen peroxide that may contribute to the diverse toxic effects of this enzyme. Exhibits diverse biological activities, such as hemolysis, edema, hemorrhage, apoptosis, antibacterial and antiparasitic activities, as well as regulation of platelet aggregation. Effects of snake L-amino oxidases on platelets are controversial, since they either induce aggregation or inhibit agonist-induced aggregation. These different effects are probably due to different experimental conditions. This chain is L-amino-acid oxidase, found in Crotalus adamanteus (Eastern diamondback rattlesnake).